Here is a 200-residue protein sequence, read N- to C-terminus: Serine/threonine-protein kinase mos (200 aa).

The Protein kinase domain occupies 2–200 (LCLLQPLGSG…ELLKGERVTA (199 aa)). Residues 8–16 (LGSGGFGSV) and lysine 29 contribute to the ATP site. The active-site Proton acceptor is the aspartate 143.

It belongs to the protein kinase superfamily. Ser/Thr protein kinase family.

It catalyses the reaction L-seryl-[protein] + ATP = O-phospho-L-seryl-[protein] + ADP + H(+). The catalysed reaction is L-threonyl-[protein] + ATP = O-phospho-L-threonyl-[protein] + ADP + H(+). The protein is Serine/threonine-protein kinase mos (MOS) of Nycticorax nycticorax (Black-crowned night-heron).